A 322-amino-acid chain; its full sequence is Picrinine-N-methytransferase (322 aa).

Residues 103-112 (MLDVGCGLGG) are SAM motif I. Positions 166–174 (GTFDLVFTI) are SAM motif II. Residues 193–202 (VAAPGAPVVI) are SAM motif III.

This sequence belongs to the class I-like SAM-binding methyltransferase superfamily. gTMT family. Homodimer. Accumulates in tissues actively synthesizing monoterpenoid indole alkaloids (MIAs) (at protein level). Mainly expressed in young leaves, but barely in roots and stems.

The protein localises to the cytoplasm. It localises to the cytosol. The enzyme catalyses picrinine + S-adenosyl-L-methionine = ervincine + S-adenosyl-L-homocysteine + H(+). The protein operates within alkaloid biosynthesis; vindoline biosynthesis. In terms of biological role, S-adenosyl-L-methionine-dependent N-methyltransferase involved in the biosynthesis of biologically active monoterpenoid indole alkaloids (MIAs) natural products including vindoline. Catalyzes the conversion of picrinine to N-methylpicrinine (ervincine). Also accepts, with low efficiency, 21-hydroxycyclolochnericine and norajmaline as substrates. This Vinca minor (Common periwinkle) protein is Picrinine-N-methytransferase.